A 423-amino-acid polypeptide reads, in one-letter code: D-tagatose-1,6-bisphosphate aldolase subunit GatZ (423 aa).

Belongs to the GatZ/KbaZ family. GatZ subfamily. Forms a complex with GatY.

The protein operates within carbohydrate metabolism; D-tagatose 6-phosphate degradation; D-glyceraldehyde 3-phosphate and glycerone phosphate from D-tagatose 6-phosphate: step 2/2. Its function is as follows. Component of the tagatose-1,6-bisphosphate aldolase GatYZ that is required for full activity and stability of the Y subunit. Could have a chaperone-like function for the proper and stable folding of GatY. When expressed alone, GatZ does not show any aldolase activity. Is involved in the catabolism of galactitol. In Klebsiella pneumoniae subsp. pneumoniae (strain ATCC 700721 / MGH 78578), this protein is D-tagatose-1,6-bisphosphate aldolase subunit GatZ.